The primary structure comprises 220 residues: Elongation factor Ts, chloroplastic (220 aa).

Belongs to the EF-Ts family.

The protein resides in the plastid. Its subcellular location is the chloroplast. Its function is as follows. Associates with the EF-Tu.GDP complex and induces the exchange of GDP to GTP. It remains bound to the aminoacyl-tRNA.EF-Tu.GTP complex up to the GTP hydrolysis stage on the ribosome. This chain is Elongation factor Ts, chloroplastic (tsf), found in Pyropia yezoensis (Susabi-nori).